Here is a 122-residue protein sequence, read N- to C-terminus: Acidic phospholipase A2 Tpu-E6c (122 aa).

Cystine bridges form between C26–C115, C28–C44, C43–C95, C49–C122, C50–C88, C57–C81, and C75–C86. Ca(2+) contacts are provided by Y27, G29, and G31. The active site involves H47. Ca(2+) is bound at residue D48. D89 is a catalytic residue.

Monomer. Ca(2+) serves as cofactor. As to expression, expressed by the venom gland.

The protein resides in the secreted. The enzyme catalyses a 1,2-diacyl-sn-glycero-3-phosphocholine + H2O = a 1-acyl-sn-glycero-3-phosphocholine + a fatty acid + H(+). Functionally, snake venom phospholipase A2 (PLA2) that impairs hemostasis. It weakly inhibits ADP-induced platelet aggregation when tested on platelet rich plasma from human and rabbit blood (15-25% of inhibition at 5-10 ug of enzyme), and dose-dependently inhibits blood coagulation, possibly by inhibiting thrombin activation. Exhibits high hydrolytic activities toward L-dipalmitoyl phosphatidylcholine. PLA2 catalyzes the calcium-dependent hydrolysis of the 2-acyl groups in 3-sn-phosphoglycerides. The protein is Acidic phospholipase A2 Tpu-E6c of Craspedocephalus puniceus (Flat-nosed pitviper).